A 412-amino-acid chain; its full sequence is Putative competence-damage inducible protein (412 aa).

It belongs to the CinA family.

This chain is Putative competence-damage inducible protein, found in Bacillus cereus (strain ATCC 10987 / NRS 248).